Reading from the N-terminus, the 418-residue chain is MEIDSATNGNSDTVMTESAATITPSPVVVSSSRSNQFTESLKLEHQLLRVPFEHYKKTIRTNHRSFEKEVSTIVNGVGELADSDWSKDDTVSRLTCLVTRLQGLKRKLEEGSNVENLQAQRCRARIDHLDSVDVENITEWNNTKLKRILVDYMLRMSYFETATKLSESSNIMDLVDIDIFREAKKVIDALKNREVASALTWCADNKTRLKKSKSKFEFQLRLQEFIELVRVDTAESYKKAIQYARKHLASWGTTHMKELQHVLATLAFKSTTECSKYKVLFELRQWDVLVDQFKQEFCKLYGMTMEPLLNIYLQAGLSALKTPYGLEEGCTKEDPLSQENFRKLALPLPFSKQHHSKLVCYISKELMDTENPPQVLPNGYVYSTKALKEMAEKNGGKITCPRTGLVCNYTELVKAYIS.

Positions 141 to 173 (NNTKLKRILVDYMLRMSYFETATKLSESSNIMD) constitute a LisH domain. One can recognise a CTLH domain in the interval 179 to 236 (IFREAKKVIDALKNREVASALTWCADNKTRLKKSKSKFEFQLRLQEFIELVRVDTAES). The RING-Gid-type zinc finger occupies 330 to 403 (CTKEDPLSQE…NGGKITCPRT (74 aa)).

In terms of assembly, interacts with RANBPM.

The protein resides in the cytoplasm. This Arabidopsis thaliana (Mouse-ear cress) protein is Protein MAEA homolog.